The chain runs to 106 residues: UPF0145 protein CLL_A2504 (106 aa).

The protein belongs to the UPF0145 family.

This Clostridium botulinum (strain Eklund 17B / Type B) protein is UPF0145 protein CLL_A2504.